A 33-amino-acid polypeptide reads, in one-letter code: Cytochrome b6-f complex subunit 8 (33 aa).

A helical membrane pass occupies residues 2 to 22; the sequence is LITLGWASLAALFSFSIAMVV.

This sequence belongs to the PetN family. The 4 large subunits of the cytochrome b6-f complex are cytochrome b6, subunit IV (17 kDa polypeptide, PetD), cytochrome f and the Rieske protein, while the 4 small subunits are PetG, PetL, PetM and PetN. The complex functions as a dimer.

The protein resides in the plastid. The protein localises to the organellar chromatophore thylakoid membrane. Functionally, component of the cytochrome b6-f complex, which mediates electron transfer between photosystem II (PSII) and photosystem I (PSI), cyclic electron flow around PSI, and state transitions. The sequence is that of Cytochrome b6-f complex subunit 8 from Paulinella chromatophora.